A 264-amino-acid chain; its full sequence is Thymidylate synthase (264 aa).

A dUMP-binding site is contributed by Arg-21. His-51 serves as a coordination point for (6R)-5,10-methylene-5,6,7,8-tetrahydrofolate. 126–127 is a binding site for dUMP; the sequence is RR. Residue Cys-146 is the Nucleophile of the active site. Residues 166–169, Asn-177, and 207–209 contribute to the dUMP site; these read RSGD and HLY. Residue Asp-169 coordinates (6R)-5,10-methylene-5,6,7,8-tetrahydrofolate. A (6R)-5,10-methylene-5,6,7,8-tetrahydrofolate-binding site is contributed by Ala-263.

This sequence belongs to the thymidylate synthase family. Bacterial-type ThyA subfamily. In terms of assembly, homodimer.

It localises to the cytoplasm. The catalysed reaction is dUMP + (6R)-5,10-methylene-5,6,7,8-tetrahydrofolate = 7,8-dihydrofolate + dTMP. Its pathway is pyrimidine metabolism; dTTP biosynthesis. In terms of biological role, catalyzes the reductive methylation of 2'-deoxyuridine-5'-monophosphate (dUMP) to 2'-deoxythymidine-5'-monophosphate (dTMP) while utilizing 5,10-methylenetetrahydrofolate (mTHF) as the methyl donor and reductant in the reaction, yielding dihydrofolate (DHF) as a by-product. This enzymatic reaction provides an intracellular de novo source of dTMP, an essential precursor for DNA biosynthesis. The protein is Thymidylate synthase of Brevibacillus brevis (strain 47 / JCM 6285 / NBRC 100599).